The following is a 199-amino-acid chain: Dephospho-CoA kinase (199 aa).

The DPCK domain occupies 3-199 (KVGLTGGICS…DLLEFFTLYQ (197 aa)). Position 11–16 (11–16 (CSGKST)) interacts with ATP.

The protein belongs to the CoaE family.

The protein localises to the cytoplasm. It catalyses the reaction 3'-dephospho-CoA + ATP = ADP + CoA + H(+). The protein operates within cofactor biosynthesis; coenzyme A biosynthesis; CoA from (R)-pantothenate: step 5/5. Catalyzes the phosphorylation of the 3'-hydroxyl group of dephosphocoenzyme A to form coenzyme A. The chain is Dephospho-CoA kinase from Clostridium perfringens (strain 13 / Type A).